The chain runs to 234 residues: MNDIAHNLAQVRDKISAAATRCGRSPEEITLLAVSKTKPASAIAEAIDAGQRQFGENYVQEGVDKIRHFQELGVTGLEWHFIGPLQSNKSRLVAEHFDWCHTIDRLRIATRLNDQRPAELPPLNVLIQINISDENSKSGIQLAELDELAAAVAELPRLRLRGLMAIPAPESEYVRQFEVARQMAVAFAGLKTRYPHIDTLSLGMSDDMEAAIAAGSTMVRIGTAIFGARDYSKK.

Lys36 is modified (N6-(pyridoxal phosphate)lysine).

The protein belongs to the pyridoxal phosphate-binding protein YggS/PROSC family. In terms of assembly, monomer.

In terms of biological role, pyridoxal 5'-phosphate (PLP)-binding protein, which is involved in PLP homeostasis. This Escherichia coli O157:H7 protein is Pyridoxal phosphate homeostasis protein (yggS).